Consider the following 1068-residue polypeptide: Phosphatidylinositol 4,5-bisphosphate 3-kinase catalytic subunit alpha isoform (1068 aa).

The PI3K-ABD domain occupies 16–105 (MPPRILVECL…QPFLKVIEPV (90 aa)). The 103-residue stretch at 187–289 (KGQIIVVIWV…GRMPNLMLMA (103 aa)) folds into the PI3K-RBD domain. The C2 PI3K-type domain occupies 330–487 (INSALRIKIL…DWFSSVVKFP (158 aa)). A PIK helical domain is found at 517-694 (LARDNELREN…GLLLESYCRA (178 aa)). The PI3K/PI4K catalytic domain occupies 765–1051 (RLEECRIMSS…QMNDAHHGGW (287 aa)). Residues 771-777 (IMSSAKR) form a G-loop region. The segment at 912 to 920 (GIGDRHNSN) is catalytic loop. The segment at 931-957 (HIDFGHFLDHKKKKFGYKRERVPFVLT) is activation loop.

It belongs to the PI3/PI4-kinase family. Heterodimer of a catalytic subunit PIK3CA and a p85 regulatory subunit (PIK3R1, PIK3R2 or PIK3R3). Interacts with IRS1 in nuclear extracts. Interacts with RUFY3. Interacts with RASD2. Interacts with APPL1. Interacts with HRAS and KRAS. Interaction with HRAS/KRAS is required for PI3K pathway signaling and cell proliferation stimulated by EGF and FGF2. Interacts with FAM83B; activates the PI3K/AKT signaling cascade.

It carries out the reaction a 1,2-diacyl-sn-glycero-3-phospho-(1D-myo-inositol-4,5-bisphosphate) + ATP = a 1,2-diacyl-sn-glycero-3-phospho-(1D-myo-inositol-3,4,5-trisphosphate) + ADP + H(+). It catalyses the reaction a 1,2-diacyl-sn-glycero-3-phospho-(1D-myo-inositol) + ATP = a 1,2-diacyl-sn-glycero-3-phospho-(1D-myo-inositol-3-phosphate) + ADP + H(+). The catalysed reaction is L-seryl-[protein] + ATP = O-phospho-L-seryl-[protein] + ADP + H(+). The enzyme catalyses 1,2-dioctanoyl-sn-glycero-3-phospho-(1D-myo-inositol-4,5-bisphosphate) + ATP = 1,2-dioctanoyl-sn-glycero-3-phospho-(1D-myo-inositol-3,4,5-trisphosphate) + ADP + H(+). It carries out the reaction 1-octadecanoyl-2-(5Z,8Z,11Z,14Z)-eicosatetraenoyl-sn-glycero-3-phospho-1D-myo-inositol 4,5-bisphosphate + ATP = 1-octadecanoyl-2-(5Z,8Z,11Z,14Z-eicosatetraenoyl)-sn-glycero-3-phospho-(1D-myo-inositol 3,4,5-triphosphate) + ADP + H(+). Its pathway is phospholipid metabolism; phosphatidylinositol phosphate biosynthesis. Phosphoinositide-3-kinase (PI3K) phosphorylates phosphatidylinositol (PI) and its phosphorylated derivatives at position 3 of the inositol ring to produce 3-phosphoinositides. Uses ATP and PtdIns(4,5)P2 (phosphatidylinositol 4,5-bisphosphate) to generate phosphatidylinositol 3,4,5-trisphosphate (PIP3). PIP3 plays a key role by recruiting PH domain-containing proteins to the membrane, including AKT1 and PDPK1, activating signaling cascades involved in cell growth, survival, proliferation, motility and morphology. Participates in cellular signaling in response to various growth factors. Involved in the activation of AKT1 upon stimulation by receptor tyrosine kinases ligands such as EGF, insulin, IGF1, VEGFA and PDGF. Involved in signaling via insulin-receptor substrate (IRS) proteins. Essential in endothelial cell migration during vascular development through VEGFA signaling, possibly by regulating RhoA activity. Required for lymphatic vasculature development, possibly by binding to RAS and by activation by EGF and FGF2, but not by PDGF. Regulates invadopodia formation through the PDPK1-AKT1 pathway. Participates in cardiomyogenesis in embryonic stem cells through a AKT1 pathway. Participates in vasculogenesis in embryonic stem cells through PDK1 and protein kinase C pathway. In addition to its lipid kinase activity, it displays a serine-protein kinase activity that results in the autophosphorylation of the p85alpha regulatory subunit as well as phosphorylation of other proteins such as 4EBP1, H-Ras, the IL-3 beta c receptor and possibly others. Plays a role in the positive regulation of phagocytosis and pinocytosis. This Homo sapiens (Human) protein is Phosphatidylinositol 4,5-bisphosphate 3-kinase catalytic subunit alpha isoform (PIK3CA).